The sequence spans 79 residues: Small ribosomal subunit protein uS17 (79 aa).

This sequence belongs to the universal ribosomal protein uS17 family. In terms of assembly, part of the 30S ribosomal subunit.

In terms of biological role, one of the primary rRNA binding proteins, it binds specifically to the 5'-end of 16S ribosomal RNA. In Orientia tsutsugamushi (strain Boryong) (Rickettsia tsutsugamushi), this protein is Small ribosomal subunit protein uS17.